The chain runs to 300 residues: Protein YIF1B-B (300 aa).

The segment at 1-46 is disordered; the sequence is MNQESSFRAPPKRRVRGSNPNISNPHQLFDDTSGGPVPHGGDFPNH. At 1-142 the chain is on the cytoplasmic side; the sequence is MNQESSFRAP…APRFDINAPD (142 aa). A helical membrane pass occupies residues 143–163; it reads LYIPVMAFITYILVAGLALGT. Topologically, residues 164–178 are extracellular; sequence QSRFSPEILGMQASS. The chain crosses the membrane as a helical span at residues 179–199; sequence ALAWLIVEVLAILLSLYLVTV. Residues 200-205 lie on the Cytoplasmic side of the membrane; sequence NTDLTT. The chain crosses the membrane as a helical span at residues 206–226; the sequence is VDLVAFSGYKYVGMISGVIAG. Leu-227 is a topological domain (extracellular). The chain crosses the membrane as a helical span at residues 228-248; sequence LFGNTGYYVVLAWCCISIVFF. Residues 249 to 278 are Cytoplasmic-facing; it reads MIRTLRLKILSEAAAEGVLVRGARNQLRMY. The helical transmembrane segment at 279–299 threads the bilayer; sequence LTMAIAAVQPIFMYWLTYHLV. Residue Arg-300 is a topological domain, extracellular.

This sequence belongs to the YIF1 family.

Its subcellular location is the endoplasmic reticulum membrane. It is found in the golgi apparatus membrane. The protein localises to the endoplasmic reticulum-Golgi intermediate compartment membrane. In terms of biological role, functions in endoplasmic reticulum to Golgi vesicle-mediated transport and regulates the proper organization of the endoplasmic reticulum and the Golgi. Plays a key role in targeting to neuronal dendrites receptors such as HTR1A. Plays also a role in primary cilium and sperm flagellum assembly probably through protein transport to these compartments. In Xenopus laevis (African clawed frog), this protein is Protein YIF1B-B (yif1b-b).